We begin with the raw amino-acid sequence, 151 residues long: 3-dehydroquinate dehydratase (151 aa).

Tyr24 serves as the catalytic Proton acceptor. Substrate-binding residues include Asn76, His82, and Asp89. His102 functions as the Proton donor in the catalytic mechanism. Substrate is bound by residues 103-104 and Arg113; that span reads LS.

It belongs to the type-II 3-dehydroquinase family. As to quaternary structure, homododecamer.

It catalyses the reaction 3-dehydroquinate = 3-dehydroshikimate + H2O. Its pathway is metabolic intermediate biosynthesis; chorismate biosynthesis; chorismate from D-erythrose 4-phosphate and phosphoenolpyruvate: step 3/7. In terms of biological role, catalyzes a trans-dehydration via an enolate intermediate. The protein is 3-dehydroquinate dehydratase of Acinetobacter baumannii (strain AB307-0294).